A 244-amino-acid polypeptide reads, in one-letter code: Sortase B (244 aa).

The Cytoplasmic portion of the chain corresponds to 1–6; sequence MRMKRF. A helical transmembrane segment spans residues 7–24; the sequence is LTIVQILLVVIIIIFGYK. Residues 25–244 lie on the Extracellular side of the membrane; it reads IVQTYIEDKQ…VVVAKIIKVS (220 aa). C223 functions as the Acyl-thioester intermediate in the catalytic mechanism.

This sequence belongs to the bacterial sortase family. Class B subfamily.

It localises to the cell membrane. The enzyme catalyses The enzyme catalyzes a cell wall sorting reaction in which a surface protein with a sorting signal containing a NPXTN motif is cleaved between the Thr and Asn residue. The resulting threonine carboxyl end of the protein is covalently attached to a pentaglycine cross-bridge of peptidoglycan.. With respect to regulation, inhibited by MTSET (2-(Trimethylammonium)-ethyl-methanethiosulfonate) and E64 ([n- (l-3-trans-carboxyoxirane-2-carbonyl)-l-leucyl]-amido(4-guanido)butane). Inhibited by coptisine. Its function is as follows. Transpeptidase that anchors surface proteins to the cell wall. Recognizes and modifies its substrate by proteolytic cleavage of a C-terminal sorting signal. Following cleavage, a covalent intermediate is formed via a thioester bond between the sortase and its substrate, which is then transferred and covalently attached to the cell wall. This sortase recognizes an Asn-Pro-Gln-Thr-Asn (NPQTN) motif in IsdC, which is cleaved by the sortase between the threonine and aspargine residues; may only have 1 substrate in this bacterium. May be dedicated to the process of iron acquisition during bacterial infection. In Staphylococcus aureus (strain NCTC 8325 / PS 47), this protein is Sortase B.